The primary structure comprises 224 residues: MSNENQTPRGTRRRKNLSEKQLAILDVIQRSVSQRGYPPSMREIGDAVGLSSLSSVTHQLNQLELSGYLRRDPNRPRALEILIDLPSAAAPDFESQTPVGDAAMVPLVGRIAAGVPITAEQQVEEVFPLPRQLVGNGELFMLKVVGESMIDAAICDGDWVVVRAQNTAENGDIVAAMLDEEATVKVFRQRDGHTWLLPRNSNFEPILGDFSQILGKVVAVLRAV.

The H-T-H motif DNA-binding region spans 41–61 (MREIGDAVGLSSLSSVTHQLN). Active-site for autocatalytic cleavage activity residues include Ser-148 and Lys-185.

This sequence belongs to the peptidase S24 family. In terms of assembly, homodimer.

The enzyme catalyses Hydrolysis of Ala-|-Gly bond in repressor LexA.. Its function is as follows. Represses a number of genes involved in the response to DNA damage (SOS response), including recA and lexA. In the presence of single-stranded DNA, RecA interacts with LexA causing an autocatalytic cleavage which disrupts the DNA-binding part of LexA, leading to derepression of the SOS regulon and eventually DNA repair. In Leifsonia xyli subsp. xyli (strain CTCB07), this protein is LexA repressor.